A 540-amino-acid chain; its full sequence is Bifunctional ribokinase/ribose-5-phosphate isomerase A (540 aa).

A ribokinase region spans residues 1–308 (MKKIIVVGST…AILNVINQDQ (308 aa)). Substrate-binding positions include 11–13 (NVD), 39–44 (GGKGAN), and E141. Residues N185 and 221 to 226 (TVGGRG) contribute to the ATP site. Residues D247 and T249 each contribute to the K(+) site. 252–253 (GD) serves as a coordination point for ATP. D253 is a substrate binding site. The active-site Proton acceptor; for ribokinase activity is the D253. K(+) contacts are provided by T284, V287, G289, and S293. The segment at 309-540 (MTKTEIEKQK…IKTIKRSDLS (232 aa)) is ribose-5-phosphate isomerase A. Residues 339–342 (SGTT), 395–398 (DGAD), and 408–411 (KGGG) each bind substrate. E417 acts as the Proton acceptor; for ribose-5-phosphate isomerase activity in catalysis. Residue K435 participates in substrate binding.

The protein in the N-terminal section; belongs to the carbohydrate kinase PfkB family. Ribokinase subfamily. This sequence in the C-terminal section; belongs to the ribose 5-phosphate isomerase family. The cofactor is Mg(2+).

The protein localises to the cytoplasm. It carries out the reaction D-ribose + ATP = D-ribose 5-phosphate + ADP + H(+). The enzyme catalyses aldehydo-D-ribose 5-phosphate = D-ribulose 5-phosphate. The protein operates within carbohydrate metabolism; D-ribose degradation; D-ribose 5-phosphate from beta-D-ribopyranose: step 2/2. It functions in the pathway carbohydrate degradation; pentose phosphate pathway; D-ribose 5-phosphate from D-ribulose 5-phosphate (non-oxidative stage): step 1/1. Its activity is regulated as follows. Activated by a monovalent cation that binds near, but not in, the active site. The most likely occupant of the site in vivo is potassium. Also activated by ammonium ion. Ion binding induces a conformational change that may alter substrate affinity. Its function is as follows. Bifunctional enzyme that catalyzes the phosphorylation of ribose at O-5 in a reaction requiring ATP and magnesium, and the reversible conversion of ribose 5-phosphate to ribulose 5-phosphate. In Fructilactobacillus sanfranciscensis (strain ATCC 27651 / DSM 20451 / JCM 5668 / CCUG 30143 / KCTC 3205 / NCIMB 702811 / NRRL B-3934 / L-12) (Lactobacillus sanfranciscensis), this protein is Bifunctional ribokinase/ribose-5-phosphate isomerase A (rbsK/rbiA).